Here is a 95-residue protein sequence, read N- to C-terminus: Small ribosomal subunit protein uS17 (95 aa).

The protein belongs to the universal ribosomal protein uS17 family. In terms of assembly, part of the 30S ribosomal subunit.

Functionally, one of the primary rRNA binding proteins, it binds specifically to the 5'-end of 16S ribosomal RNA. This chain is Small ribosomal subunit protein uS17, found in Mycoplasmopsis synoviae (strain 53) (Mycoplasma synoviae).